The chain runs to 151 residues: MLNSLLPADWLYLERIVRFGETDSAGVIHFYQLLRWCHESWEESLERYGLKAADVFPNILNKEKQPLVALPIIHCEADFWKPLQTGDHISIELLPKKISAGSFQVTFKFKRGDNYVAQALIQHQAINSQTRSCCELSTKINSWLAESLCID.

Asp23 is a catalytic residue.

The protein belongs to the 4-hydroxybenzoyl-CoA thioesterase family. DHNA-CoA hydrolase subfamily.

The enzyme catalyses 1,4-dihydroxy-2-naphthoyl-CoA + H2O = 1,4-dihydroxy-2-naphthoate + CoA + H(+). The protein operates within cofactor biosynthesis; phylloquinone biosynthesis. Its pathway is quinol/quinone metabolism; 1,4-dihydroxy-2-naphthoate biosynthesis; 1,4-dihydroxy-2-naphthoate from chorismate: step 7/7. Catalyzes the hydrolysis of 1,4-dihydroxy-2-naphthoyl-CoA (DHNA-CoA) to 1,4-dihydroxy-2-naphthoate (DHNA), a reaction involved in phylloquinone (vitamin K1) biosynthesis. The sequence is that of 1,4-dihydroxy-2-naphthoyl-CoA hydrolase from Prochlorococcus marinus (strain MIT 9211).